A 219-amino-acid polypeptide reads, in one-letter code: 7-cyano-7-deazaguanine synthase (219 aa).

10-20 (FSGGQDSTTCL) is an ATP binding site. 4 residues coordinate Zn(2+): Cys-187, Cys-196, Cys-199, and Cys-202.

This sequence belongs to the QueC family. Homodimer. It depends on Zn(2+) as a cofactor.

The enzyme catalyses 7-carboxy-7-deazaguanine + NH4(+) + ATP = 7-cyano-7-deazaguanine + ADP + phosphate + H2O + H(+). Its pathway is purine metabolism; 7-cyano-7-deazaguanine biosynthesis. Functionally, catalyzes the ATP-dependent conversion of 7-carboxy-7-deazaguanine (CDG) to 7-cyano-7-deazaguanine (preQ(0)). This is 7-cyano-7-deazaguanine synthase from Lysinibacillus sphaericus (strain C3-41).